Here is a 258-residue protein sequence, read N- to C-terminus: Isoprenyl transferase (258 aa).

Aspartate 38 is an active-site residue. Residue aspartate 38 participates in Mg(2+) binding. Substrate-binding positions include 39–42 (GNGR), tryptophan 43, arginine 51, histidine 55, and 83–85 (STE). Asparagine 86 (proton acceptor) is an active-site residue. Residues tryptophan 87, arginine 89, arginine 206, and 212 to 214 (RIS) each bind substrate. A Mg(2+)-binding site is contributed by glutamate 225.

It belongs to the UPP synthase family. Homodimer. Mg(2+) is required as a cofactor.

Functionally, catalyzes the condensation of isopentenyl diphosphate (IPP) with allylic pyrophosphates generating different type of terpenoids. The sequence is that of Isoprenyl transferase from Bacillus cereus (strain ATCC 10987 / NRS 248).